We begin with the raw amino-acid sequence, 145 residues long: Basic phospholipase A2 S6-45 (145 aa).

The signal sequence occupies residues 1–19; that stretch reads MYPAHLLVLLAVCVSLLGA. A propeptide spanning residues 20 to 27 is cleaved from the precursor; the sequence is SDIPPQPL. Cystine bridges form between C38-C99, C54-C144, C56-C72, C71-C127, C78-C120, C88-C113, and C106-C118. Y55, G57, and G59 together coordinate Ca(2+). H75 is a catalytic residue. D76 contacts Ca(2+). D121 is an active-site residue.

The protein belongs to the phospholipase A2 family. Group I subfamily. D49 sub-subfamily. It depends on Ca(2+) as a cofactor. Expressed by the venom gland.

Its subcellular location is the secreted. The enzyme catalyses a 1,2-diacyl-sn-glycero-3-phosphocholine + H2O = a 1-acyl-sn-glycero-3-phosphocholine + a fatty acid + H(+). Snake venom phospholipase A2 (PLA2) that inhibits collagen-induced platelet aggregation. PLA2 catalyzes the calcium-dependent hydrolysis of the 2-acyl groups in 3-sn-phosphoglycerides. This is Basic phospholipase A2 S6-45 from Austrelaps superbus (Lowland copperhead snake).